A 355-amino-acid chain; its full sequence is Peptide chain release factor 1 (355 aa).

An N5-methylglutamine modification is found at Gln231. The segment at 283-303 is disordered; that stretch reads NAQNKEARKTQVGSGDRSERI.

Belongs to the prokaryotic/mitochondrial release factor family. Methylated by PrmC. Methylation increases the termination efficiency of RF1.

The protein localises to the cytoplasm. Functionally, peptide chain release factor 1 directs the termination of translation in response to the peptide chain termination codons UAG and UAA. The sequence is that of Peptide chain release factor 1 from Helicobacter hepaticus (strain ATCC 51449 / 3B1).